We begin with the raw amino-acid sequence, 488 residues long: Putative sugar transporter ERD6-like 13 (488 aa).

Helical transmembrane passes span 51–71 (LILL…GTAA), 89–109 (LAEF…GAAM), 116–138 (VFGR…LMIA), 151–171 (LFLG…IVEI), 182–202 (AINS…GSVI), 207–227 (LALI…FIPE), 291–311 (VGIG…TFYL), 324–344 (VGVM…IVIV), 353–373 (LTVA…SFLF), 390–410 (GVLV…WVMI), 423–445 (GTLC…NFLF), and 451–471 (GVFF…MKMV).

This sequence belongs to the major facilitator superfamily. Sugar transporter (TC 2.A.1.1) family.

It localises to the membrane. Functionally, sugar transporter. In Arabidopsis thaliana (Mouse-ear cress), this protein is Putative sugar transporter ERD6-like 13.